We begin with the raw amino-acid sequence, 512 residues long: ATP synthase subunit alpha (512 aa).

169 to 176 (GDRQTGKT) contributes to the ATP binding site.

It belongs to the ATPase alpha/beta chains family. As to quaternary structure, F-type ATPases have 2 components, CF(1) - the catalytic core - and CF(0) - the membrane proton channel. CF(1) has five subunits: alpha(3), beta(3), gamma(1), delta(1), epsilon(1). CF(0) has three main subunits: a(1), b(2) and c(9-12). The alpha and beta chains form an alternating ring which encloses part of the gamma chain. CF(1) is attached to CF(0) by a central stalk formed by the gamma and epsilon chains, while a peripheral stalk is formed by the delta and b chains.

It is found in the cell inner membrane. It catalyses the reaction ATP + H2O + 4 H(+)(in) = ADP + phosphate + 5 H(+)(out). Its function is as follows. Produces ATP from ADP in the presence of a proton gradient across the membrane. The alpha chain is a regulatory subunit. The chain is ATP synthase subunit alpha from Ruegeria pomeroyi (strain ATCC 700808 / DSM 15171 / DSS-3) (Silicibacter pomeroyi).